Consider the following 751-residue polypeptide: Semaphorin-3C (751 aa).

Positions 1–20 are cleaved as a signal peptide; the sequence is MAFRAICVLVGVFICSICVR. Positions 28 to 511 constitute a Sema domain; sequence RVYLTFDELR…SNEGVSQVSL (484 aa). N-linked (GlcNAc...) asparagine glycosylation is present at N81. The cysteines at positions 101 and 112 are disulfide-linked. The N-linked (GlcNAc...) asparagine glycan is linked to N123. Residues C130 and C139 are joined by a disulfide bond. N252 and N268 each carry an N-linked (GlcNAc...) asparagine glycan. 2 disulfide bridges follow: C266–C378 and C290–C338. Residue N465 is glycosylated (N-linked (GlcNAc...) asparagine). Residues C514 and C532 are joined by a disulfide bond. The 85-residue stretch at 571–655 folds into the Ig-like C2-type domain; the sequence is AYRNAAEIVQ…TENSFKQTIA (85 aa). N-linked (GlcNAc...) asparagine glycosylation is found at N585 and N586. A disulfide bridge links C643 with C709.

The protein belongs to the semaphorin family. As to quaternary structure, interacts with PLXND1.

It is found in the secreted. Binds to plexin family members and plays an important role in the regulation of developmental processes. Required for normal cardiovascular development during embryogenesis. Functions as attractant for growing axons, and thereby plays an important role in axon growth and axon guidance. This chain is Semaphorin-3C (Sema3c), found in Mus musculus (Mouse).